Reading from the N-terminus, the 390-residue chain is 5-hydroxytryptamine receptor 1B (390 aa).

Topologically, residues 1–46 (MEEPGAQCAPPXPAGSETWVPQANLSSAPSQNCSAKDYIYQDSIAL) are extracellular. N-linked (GlcNAc...) asparagine glycosylation is found at N24 and N32. Residues 47-72 (PWKVLLVMLLALITLATTLSNAFVIA) traverse the membrane as a helical segment. The Cytoplasmic portion of the chain corresponds to 73 to 86 (TVYRTRKLHTPANY). Residues 87–111 (LIASLAVTDLLVSILVMPISTMYTV) form a helical membrane-spanning segment. Over 112–119 (TGRWTLGQ) the chain is Extracellular. The helical transmembrane segment at 120 to 145 (VVCDFWLSSDITCCTASILHLCVIAL) threads the bilayer. A disulfide bridge links C122 with C199. D129 and T134 together coordinate ergotamine. The short motif at 146 to 148 (DRY) is the DRY motif; important for ligand-induced conformation changes and signaling element. The Cytoplasmic segment spans residues 146–165 (DRYWAITDAVEYSAKRTPKR). The chain crosses the membrane as a helical span at residues 166-184 (AAVMIALVWVFSISISLPP). The Extracellular segment spans residues 185–205 (FFWRQAKAEEEVSECVVNTDH). An ergotamine-binding site is contributed by V201. The chain crosses the membrane as a helical span at residues 206–229 (ILYTVYSTVGAFYFPTLLLIALYG). Residues 230 to 315 (RIYVEARSRI…AARERKATKT (86 aa)) lie on the Cytoplasmic side of the membrane. The segment covering 259–272 (DSPGSTSSVTSINS) has biased composition (polar residues). A disordered region spans residues 259–281 (DSPGSTSSVTSINSRVPDVPSES). A helical transmembrane segment spans residues 316 to 337 (LGIILGAFIVCWLPFFIISLVM). Over 338–347 (PICKDACWFH) the chain is Extracellular. A helical membrane pass occupies residues 348 to 370 (LAIFDFFTWLGYLNSLINPIIYT). Positions 365–369 (NPIIY) match the NPxxY motif; important for ligand-induced conformation changes and signaling motif. Residues 371 to 390 (MSNEDFKQAFHKLIRFKCTS) lie on the Cytoplasmic side of the membrane. The S-palmitoyl cysteine moiety is linked to residue C388.

This sequence belongs to the G-protein coupled receptor 1 family. Homodimer. Heterodimer with HTR1D. Post-translationally, phosphorylated. Desensitization of the receptor may be mediated by its phosphorylation. Palmitoylated.

It localises to the cell membrane. Its function is as follows. G-protein coupled receptor for 5-hydroxytryptamine (serotonin). Also functions as a receptor for ergot alkaloid derivatives, various anxiolytic and antidepressant drugs and other psychoactive substances, such as lysergic acid diethylamide (LSD). Ligand binding causes a conformation change that triggers signaling via guanine nucleotide-binding proteins (G proteins) and modulates the activity of downstream effectors, such as adenylate cyclase. HTR1B is coupled to G(i)/G(o) G alpha proteins and mediates inhibitory neurotransmission by inhibiting adenylate cyclase activity. Arrestin family members inhibit signaling via G proteins and mediate activation of alternative signaling pathways. Regulates the release of 5-hydroxytryptamine, dopamine and acetylcholine in the brain, and thereby affects neural activity, nociceptive processing, pain perception, mood and behavior. Besides, plays a role in vasoconstriction of cerebral arteries. This Gorilla gorilla gorilla (Western lowland gorilla) protein is 5-hydroxytryptamine receptor 1B (HTR1B).